Here is a 387-residue protein sequence, read N- to C-terminus: Protoheme IX farnesyltransferase, mitochondrial (387 aa).

8 consecutive transmembrane segments (helical) span residues 95 to 115 (LTVL…YPGL), 117 to 137 (FNTL…ANAF), 183 to 203 (FLVN…YMGI), 212 to 232 (IVNT…GWAA), 242 to 262 (PGGL…FNAF), 284 to 306 (ALNA…AYIS), 311 to 330 (GPWY…ARAW), and 345 to 365 (FFAS…CHMI).

Belongs to the UbiA prenyltransferase family.

The protein localises to the mitochondrion membrane. It carries out the reaction heme b + (2E,6E)-farnesyl diphosphate + H2O = Fe(II)-heme o + diphosphate. Functionally, converts protoheme IX and farnesyl diphosphate to heme O. This chain is Protoheme IX farnesyltransferase, mitochondrial (cox10), found in Schizosaccharomyces pombe (strain 972 / ATCC 24843) (Fission yeast).